We begin with the raw amino-acid sequence, 260 residues long: uncharacterized protein (260 aa).

In terms of domain architecture, HTH iclR-type spans Val7 to Thr67. Positions Ala28 to Asn47 form a DNA-binding region, H-T-H motif. The IclR-ED domain maps to Leu82–Trp251.

This is an uncharacterized protein from Escherichia coli (strain K12).